Here is a 208-residue protein sequence, read N- to C-terminus: Large ribosomal subunit protein uL3 (208 aa).

The segment at 134–159 (SKFHREAGSTGHCTTPGRSFKNTTMP) is disordered. A compositionally biased stretch (polar residues) spans 144 to 158 (GHCTTPGRSFKNTTM).

The protein belongs to the universal ribosomal protein uL3 family. In terms of assembly, part of the 50S ribosomal subunit. Forms a cluster with proteins L14 and L19.

One of the primary rRNA binding proteins, it binds directly near the 3'-end of the 23S rRNA, where it nucleates assembly of the 50S subunit. The protein is Large ribosomal subunit protein uL3 of Treponema denticola (strain ATCC 35405 / DSM 14222 / CIP 103919 / JCM 8153 / KCTC 15104).